We begin with the raw amino-acid sequence, 317 residues long: Transaldolase (317 aa).

K132 (schiff-base intermediate with substrate) is an active-site residue.

It belongs to the transaldolase family. Type 1 subfamily. As to quaternary structure, homodimer.

The protein resides in the cytoplasm. The enzyme catalyses D-sedoheptulose 7-phosphate + D-glyceraldehyde 3-phosphate = D-erythrose 4-phosphate + beta-D-fructose 6-phosphate. Its pathway is carbohydrate degradation; pentose phosphate pathway; D-glyceraldehyde 3-phosphate and beta-D-fructose 6-phosphate from D-ribose 5-phosphate and D-xylulose 5-phosphate (non-oxidative stage): step 2/3. Functionally, transaldolase is important for the balance of metabolites in the pentose-phosphate pathway. This is Transaldolase from Actinobacillus succinogenes (strain ATCC 55618 / DSM 22257 / CCUG 43843 / 130Z).